A 196-amino-acid chain; its full sequence is ATP-dependent Clp protease proteolytic subunit (196 aa).

Serine 96 (nucleophile) is an active-site residue. Histidine 121 is an active-site residue.

It belongs to the peptidase S14 family. Fourteen ClpP subunits assemble into 2 heptameric rings which stack back to back to give a disk-like structure with a central cavity, resembling the structure of eukaryotic proteasomes.

Its subcellular location is the cytoplasm. It catalyses the reaction Hydrolysis of proteins to small peptides in the presence of ATP and magnesium. alpha-casein is the usual test substrate. In the absence of ATP, only oligopeptides shorter than five residues are hydrolyzed (such as succinyl-Leu-Tyr-|-NHMec, and Leu-Tyr-Leu-|-Tyr-Trp, in which cleavage of the -Tyr-|-Leu- and -Tyr-|-Trp bonds also occurs).. Its function is as follows. Cleaves peptides in various proteins in a process that requires ATP hydrolysis. Has a chymotrypsin-like activity. Plays a major role in the degradation of misfolded proteins. The polypeptide is ATP-dependent Clp protease proteolytic subunit (Streptococcus pneumoniae (strain P1031)).